A 249-amino-acid chain; its full sequence is Small ribosomal subunit protein eS6 (249 aa).

Disordered stretches follow at residues 161 to 181 and 194 to 249; these read PLAKEGKKPRTKAPKIQRLVT and LKKQ…SSQK. Basic and acidic residues predominate over residues 216 to 229; that stretch reads RSKEAKEKRQEQIA. Phosphoserine occurs at positions 235, 236, 240, 244, and 247. A compositionally biased stretch (low complexity) spans 236–249; sequence SLRASTSKSESSQK.

It belongs to the eukaryotic ribosomal protein eS6 family. In terms of assembly, component of the small ribosomal subunit. Part of the small subunit (SSU) processome, composed of more than 70 proteins and the RNA chaperone small nucleolar RNA (snoRNA) U3. Post-translationally, ribosomal protein S6 is the major substrate of protein kinases in eukaryote ribosomes. The phosphorylation is stimulated by growth factors, tumor promoting agents, and mitogens. It is dephosphorylated at growth arrest.

It localises to the cytoplasm. The protein localises to the nucleus. Its subcellular location is the nucleolus. Its function is as follows. Component of the 40S small ribosomal subunit. Plays an important role in controlling cell growth and proliferation through the selective translation of particular classes of mRNA. Part of the small subunit (SSU) processome, first precursor of the small eukaryotic ribosomal subunit. During the assembly of the SSU processome in the nucleolus, many ribosome biogenesis factors, an RNA chaperone and ribosomal proteins associate with the nascent pre-rRNA and work in concert to generate RNA folding, modifications, rearrangements and cleavage as well as targeted degradation of pre-ribosomal RNA by the RNA exosome. The sequence is that of Small ribosomal subunit protein eS6 (rps6) from Xenopus laevis (African clawed frog).